The following is a 584-amino-acid chain: DNA mismatch repair protein MutL (584 aa).

It belongs to the DNA mismatch repair MutL/HexB family.

This protein is involved in the repair of mismatches in DNA. It is required for dam-dependent methyl-directed DNA mismatch repair. May act as a 'molecular matchmaker', a protein that promotes the formation of a stable complex between two or more DNA-binding proteins in an ATP-dependent manner without itself being part of a final effector complex. This is DNA mismatch repair protein MutL from Syntrophomonas wolfei subsp. wolfei (strain DSM 2245B / Goettingen).